The sequence spans 80 residues: DNA-binding protein HU-like (80 aa).

The protein belongs to the bacterial histone-like protein family.

Histone-like DNA-binding protein which is capable of wrapping DNA to stabilize it, and thus to prevent its denaturation under extreme environmental conditions. In Rickettsia rickettsii (strain Sheila Smith), this protein is DNA-binding protein HU-like.